A 334-amino-acid chain; its full sequence is DNA-directed RNA polymerase subunit alpha (334 aa).

An alpha N-terminal domain (alpha-NTD) region spans residues methionine 1–aspartate 234. Residues isoleucine 248–glycine 334 form an alpha C-terminal domain (alpha-CTD) region.

Belongs to the RNA polymerase alpha chain family. As to quaternary structure, homodimer. The RNAP catalytic core consists of 2 alpha, 1 beta, 1 beta' and 1 omega subunit. When a sigma factor is associated with the core the holoenzyme is formed, which can initiate transcription.

The enzyme catalyses RNA(n) + a ribonucleoside 5'-triphosphate = RNA(n+1) + diphosphate. Functionally, DNA-dependent RNA polymerase catalyzes the transcription of DNA into RNA using the four ribonucleoside triphosphates as substrates. This is DNA-directed RNA polymerase subunit alpha from Hahella chejuensis (strain KCTC 2396).